The chain runs to 320 residues: Cell division protein FtsQ (320 aa).

The disordered stretch occupies residues 1–24; it reads MAQTIKRGGKGVRRATAARSAQRK. Residues 1 to 52 are Cytoplasmic-facing; the sequence is MAQTIKRGGKGVRRATAARSAQRKVQTARQQTGSVLDSVLRWLPFSEETLHR. Residues 53 to 73 traverse the membrane as a helical segment; the sequence is ILMTLILAAAAGLVWTVAVMA. Over 74 to 320 the chain is Periplasmic; sequence GIPALVSEQA…RAASAKSDEG (247 aa). The POTRA domain maps to 92–160; the sequence is FKVSHLEVRG…DTLVIDIVER (69 aa). Positions 296–320 are disordered; it reads AAEKRAEEQARAEAKRAASAKSDEG.

This sequence belongs to the FtsQ/DivIB family. FtsQ subfamily.

It is found in the cell inner membrane. Essential cell division protein. The sequence is that of Cell division protein FtsQ from Novosphingobium aromaticivorans (strain ATCC 700278 / DSM 12444 / CCUG 56034 / CIP 105152 / NBRC 16084 / F199).